A 524-amino-acid polypeptide reads, in one-letter code: MATVKDSGFEALEKLKATEPPVFLAPSSISEDARSASQYLFMKLKPHNPKCPFDQLSSDGFDAEQIWQQIDMQSQPLLTSLRQEVKRFAKNPEEIRKLGKLALKVSHEDDIDEMDMDGFDSDDVDDEDKEIESNDSEGEDEEEEEEDEEEEEEEEEEEEEEKDGDNEGIEDKFFKIKELEEFLEEGEAEEYGIDHKNKKGVAQRKKQNLSDDEDEEDDDDEEEDVEFDAFAGGDDEETDKLGKARYDDFFGGKKETKMKLKDLSEDEEAEIENKGNEKLSTHERARLKLQSKIEQMEKANLDPKHWTMQGEITAAKRPMNSALEVDLDFEHNARPAPVITEEVTASLEDLIKSRIIEARFDDVQRAPRLPTKGKREAKELDESKSKKGLAEVYEAEYFQKANPAFAPTTHSDELKKEASMLFKKLCLKLDALSHFHFTPKPVIEEMSIPNVSAIAMEEVAPVAVSDAAMLAPEEIFSGKGDIKDESELTQEDRKRRRANKKRKFKAESANEPPKKALDTSTKNP.

A Nuclear localization signal 1 motif is present at residues 85–92 (VKRFAKNP). Disordered stretches follow at residues 100-243 (KLAL…KLGK) and 259-283 (KLKD…STHE). Positions 109 to 168 (DDIDEMDMDGFDSDDVDDEDKEIESNDSEGEDEEEEEEDEEEEEEEEEEEEEEKDGDNEG) are enriched in acidic residues. Residues 131–165 (IESNDSEGEDEEEEEEDEEEEEEEEEEEEEEKDGD) adopt a coiled-coil conformation. Residues 169 to 180 (IEDKFFKIKELE) show a composition bias toward basic and acidic residues. A compositionally biased stretch (acidic residues) spans 181–191 (EFLEEGEAEEY). The span at 196 to 207 (KNKKGVAQRKKQ) shows a compositional bias: basic residues. Residues 210 to 238 (SDDEDEEDDDDEEEDVEFDAFAGGDDEET) show a composition bias toward acidic residues. Residues 257–302 (KMKLKDLSEDEEAEIENKGNEKLSTHERARLKLQSKIEQMEKANLD) are a coiled coil. The segment covering 271 to 283 (IENKGNEKLSTHE) has biased composition (basic and acidic residues). Residues 373 to 380 (GKREAKEL) carry the Nuclear localization signal 2 motif. Residues 479–524 (KGDIKDESELTQEDRKRRRANKKRKFKAESANEPPKKALDTSTKNP) form a disordered region. The segment covering 480–493 (GDIKDESELTQEDR) has biased composition (basic and acidic residues). Positions 494–504 (KRRRANKKRKF) are enriched in basic residues. A compositionally biased stretch (basic and acidic residues) spans 505–517 (KAESANEPPKKAL).

The protein belongs to the MPP10 family. Component of the ribosomal small subunit (SSU) processome. Interacts with THAL in the nucleus.

Its subcellular location is the nucleus. It is found in the nucleolus. Functionally, involved in nucleolar processing of pre-18S ribosomal RNA. This is M phase phosphoprotein 10 from Arabidopsis thaliana (Mouse-ear cress).